The sequence spans 298 residues: Phosphatidylserine decarboxylase proenzyme (298 aa).

Residues Asp-113, His-169, and Ser-256 each act as charge relay system; for autoendoproteolytic cleavage activity in the active site. Ser-256 acts as the Schiff-base intermediate with substrate; via pyruvic acid; for decarboxylase activity in catalysis. Ser-256 bears the Pyruvic acid (Ser); by autocatalysis mark.

It belongs to the phosphatidylserine decarboxylase family. PSD-B subfamily. Prokaryotic type II sub-subfamily. Heterodimer of a large membrane-associated beta subunit and a small pyruvoyl-containing alpha subunit. Pyruvate is required as a cofactor. In terms of processing, is synthesized initially as an inactive proenzyme. Formation of the active enzyme involves a self-maturation process in which the active site pyruvoyl group is generated from an internal serine residue via an autocatalytic post-translational modification. Two non-identical subunits are generated from the proenzyme in this reaction, and the pyruvate is formed at the N-terminus of the alpha chain, which is derived from the carboxyl end of the proenzyme. The autoendoproteolytic cleavage occurs by a canonical serine protease mechanism, in which the side chain hydroxyl group of the serine supplies its oxygen atom to form the C-terminus of the beta chain, while the remainder of the serine residue undergoes an oxidative deamination to produce ammonia and the pyruvoyl prosthetic group on the alpha chain. During this reaction, the Ser that is part of the protease active site of the proenzyme becomes the pyruvoyl prosthetic group, which constitutes an essential element of the active site of the mature decarboxylase.

The protein resides in the cell membrane. It catalyses the reaction a 1,2-diacyl-sn-glycero-3-phospho-L-serine + H(+) = a 1,2-diacyl-sn-glycero-3-phosphoethanolamine + CO2. The protein operates within phospholipid metabolism; phosphatidylethanolamine biosynthesis; phosphatidylethanolamine from CDP-diacylglycerol: step 2/2. In terms of biological role, catalyzes the formation of phosphatidylethanolamine (PtdEtn) from phosphatidylserine (PtdSer). This chain is Phosphatidylserine decarboxylase proenzyme, found in Desulfitobacterium hafniense (strain DSM 10664 / DCB-2).